Consider the following 219-residue polypeptide: Elongation factor Ts (219 aa).

Residues 82–85 (TDFV) are involved in Mg(2+) ion dislocation from EF-Tu.

Belongs to the EF-Ts family.

It localises to the cytoplasm. Functionally, associates with the EF-Tu.GDP complex and induces the exchange of GDP to GTP. It remains bound to the aminoacyl-tRNA.EF-Tu.GTP complex up to the GTP hydrolysis stage on the ribosome. The protein is Elongation factor Ts of Trichodesmium erythraeum (strain IMS101).